The primary structure comprises 342 residues: N-acetyl-gamma-glutamyl-phosphate reductase (342 aa).

Cys148 is an active-site residue.

Belongs to the NAGSA dehydrogenase family. Type 1 subfamily.

The protein resides in the cytoplasm. It carries out the reaction N-acetyl-L-glutamate 5-semialdehyde + phosphate + NADP(+) = N-acetyl-L-glutamyl 5-phosphate + NADPH + H(+). It functions in the pathway amino-acid biosynthesis; L-arginine biosynthesis; N(2)-acetyl-L-ornithine from L-glutamate: step 3/4. Catalyzes the NADPH-dependent reduction of N-acetyl-5-glutamyl phosphate to yield N-acetyl-L-glutamate 5-semialdehyde. This is N-acetyl-gamma-glutamyl-phosphate reductase from Methanococcus vannielii (strain ATCC 35089 / DSM 1224 / JCM 13029 / OCM 148 / SB).